Consider the following 229-residue polypeptide: Ribosome maturation factor RimM (229 aa).

A disordered region spans residues 1–37 (MAGHDSGNAKRGRSPSFGVFVRKPVERTSAKGTSDGA). The region spanning 148 to 229 (ADEFYWVDLI…RVVVDWEADY (82 aa)) is the PRC barrel domain.

Belongs to the RimM family. Binds ribosomal protein uS19.

The protein resides in the cytoplasm. An accessory protein needed during the final step in the assembly of 30S ribosomal subunit, possibly for assembly of the head region. Essential for efficient processing of 16S rRNA. May be needed both before and after RbfA during the maturation of 16S rRNA. It has affinity for free ribosomal 30S subunits but not for 70S ribosomes. The chain is Ribosome maturation factor RimM from Burkholderia pseudomallei (strain 668).